A 354-amino-acid chain; its full sequence is MEKRIVCLAGDGVGPEVMESAKEVLHMVERLYGHHFHLQDEHFGGVAIDLTGQPLPQRTLAACLASDAVLLGAVGGPRWDGAKERPEKGLLALRKGLGVFANVRPVTVESATAHLSPLKKADEIDFVVVRELTGGIYFSYPKERTDEVATDTLTYHRHEIERIVSCAFQLASKRKKKVTSIDKANVLESSKLWRIVTEEVALRYPDVELEHILVDAAAMELIRNPGRFDVIVTENLFGDILSDEASVLAGSLGMLPSASHAEKGPSLYEPIHGSAPDIAGKNKANPIAMMRSVAMMLGQSFGLTREGCAIEEAISAVLKSGKCTADIGGTETTTSFTKAVMQEMEEQALVGRGR.

Position 76 to 87 (76 to 87) interacts with NAD(+); that stretch reads GPRWDGAKERPE. 4 residues coordinate substrate: R94, R104, R130, and D215. Residues D215, D239, and D243 each contribute to the Mg(2+) site. 273–285 contributes to the NAD(+) binding site; sequence GSAPDIAGKNKAN.

This sequence belongs to the isocitrate and isopropylmalate dehydrogenases family. LeuB type 1 subfamily. As to quaternary structure, homodimer. Mg(2+) serves as cofactor. The cofactor is Mn(2+).

It is found in the cytoplasm. The enzyme catalyses (2R,3S)-3-isopropylmalate + NAD(+) = 4-methyl-2-oxopentanoate + CO2 + NADH. It functions in the pathway amino-acid biosynthesis; L-leucine biosynthesis; L-leucine from 3-methyl-2-oxobutanoate: step 3/4. Catalyzes the oxidation of 3-carboxy-2-hydroxy-4-methylpentanoate (3-isopropylmalate) to 3-carboxy-4-methyl-2-oxopentanoate. The product decarboxylates to 4-methyl-2 oxopentanoate. This chain is 3-isopropylmalate dehydrogenase, found in Bacillus anthracis.